A 746-amino-acid polypeptide reads, in one-letter code: 4-hydroxy-3-methylbut-2-en-1-yl diphosphate synthase (flavodoxin) (746 aa).

Cys-653, Cys-656, Cys-687, and Glu-694 together coordinate [4Fe-4S] cluster.

Belongs to the IspG family. Requires [4Fe-4S] cluster as cofactor.

It catalyses the reaction (2E)-4-hydroxy-3-methylbut-2-enyl diphosphate + oxidized [flavodoxin] + H2O + 2 H(+) = 2-C-methyl-D-erythritol 2,4-cyclic diphosphate + reduced [flavodoxin]. The protein operates within isoprenoid biosynthesis; isopentenyl diphosphate biosynthesis via DXP pathway; isopentenyl diphosphate from 1-deoxy-D-xylulose 5-phosphate: step 5/6. Converts 2C-methyl-D-erythritol 2,4-cyclodiphosphate (ME-2,4cPP) into 1-hydroxy-2-methyl-2-(E)-butenyl 4-diphosphate. This Chlorobaculum tepidum (strain ATCC 49652 / DSM 12025 / NBRC 103806 / TLS) (Chlorobium tepidum) protein is 4-hydroxy-3-methylbut-2-en-1-yl diphosphate synthase (flavodoxin).